The following is a 396-amino-acid chain: Actin-related protein 6 (396 aa).

Thr2 carries the N-acetylthreonine modification. Position 260 is an N6-acetyllysine (Lys260).

The protein belongs to the actin family. ARP6 subfamily. Component of the chromatin-remodeling SRCAP complex composed of at least SRCAP, DMAP1, RUVBL1, RUVBL2, ACTL6A, YEATS4, ACTR6 and ZNHIT1. Interacts with CBX1, CBX3 and CBX5.

It localises to the cytoplasm. It is found in the cytoskeleton. The protein resides in the nucleus. Its subcellular location is the nucleolus. In terms of biological role, required for formation and/or maintenance of proper nucleolar structure and function. Plays a dual role in the regulation of ribosomal DNA (rDNA) transcription. In the presence of high glucose, maintains active rDNA transcription through H2A.Z deposition and under glucose starvation, is required for the repression of rDNA transcription, and this function may be independent of H2A.Z. The sequence is that of Actin-related protein 6 (ACTR6) from Homo sapiens (Human).